The chain runs to 456 residues: MALSQAVTSRASVFKSKTWIDTGYRLHSRENKPFMVSSLLEEPSLVVLPPSMTTELILAKETDLSFWHALDDIVFSEHAFYSTRILSLPLQTTIIRRHLASGAQRFMPAVVRQLRNTLDREWGSGKPKQWRSVNLFNSLLNVVNNMVSVVFVGTDLANDQDFQTSITKHTEQVFLTMSVLRMEVESKLMPLIMERLKNSSELKAGQDKPDDLLQWLIDCQTSLKDPAERAIELEPSLIVTRVLMSYFVSVFLVNVALFNAVSIMGRLPEADYWSEIYTEARKILDVDEHGWTKEKVDKLWKTESFVKETMRFVGDACFEMRRKVMAPTGINLSDGTHLPFGTTVGLPSNAIHNDDRFYPQATSFDGLRFLKLRESDDGNTARGSLLTATSNTFLQFGHGRHGCPGRFLAADILKLILAEMTLRYEIKWDEKPEESSWFGNSLLPGQNTVVSVCPRD.

The chain crosses the membrane as a helical span at residues 243-263 (LMSYFVSVFLVNVALFNAVSI). C403 lines the heme pocket.

It belongs to the cytochrome P450 family. Requires heme as cofactor.

It is found in the membrane. The protein operates within secondary metabolite biosynthesis. Its function is as follows. Cytochrome P450 monooxygenase; part of the cluster that mediates the biosynthesis of a highly modified cyclo-arginine-tryptophan dipeptide (cRW). The first step of the pathway is perfornmed by the arginine-containing cyclodipeptide synthase (RCPDS) avaA that acts as the scaffold-generating enzyme and is responsible for formation of the cyclo-Arg-Trp (cRW) diketopiperazine. AvaB then acts as a multifunctional flavoenzyme that is responsible for generating the cyclo-Arg-formylkynurenine DKP, which can be deformylated by avaC. AvaB then further catalyzes an additional N-oxidation followed by cyclization and dehydration. The next step is an N-acetylation of the guanidine group catalyzed by the arginine N-acetyltransferase avaD. The roles of the additional enzymes identified within the ava cluster still have to be determined. This Aspergillus versicolor protein is Cytochrome P450 monooxygenase avaH.